Here is a 146-residue protein sequence, read N- to C-terminus: Large-conductance mechanosensitive channel (146 aa).

The next 3 helical transmembrane spans lie at Val-21–Ile-41, Val-44–Gly-64, and Gly-83–Val-103.

This sequence belongs to the MscL family. Homopentamer.

The protein localises to the cell inner membrane. Channel that opens in response to stretch forces in the membrane lipid bilayer. May participate in the regulation of osmotic pressure changes within the cell. The chain is Large-conductance mechanosensitive channel from Cereibacter sphaeroides (strain ATCC 17025 / ATH 2.4.3) (Rhodobacter sphaeroides).